Here is a 208-residue protein sequence, read N- to C-terminus: Protein-L-isoaspartate O-methyltransferase (208 aa).

Residue S59 is part of the active site.

It belongs to the methyltransferase superfamily. L-isoaspartyl/D-aspartyl protein methyltransferase family.

It is found in the cytoplasm. The catalysed reaction is [protein]-L-isoaspartate + S-adenosyl-L-methionine = [protein]-L-isoaspartate alpha-methyl ester + S-adenosyl-L-homocysteine. Functionally, catalyzes the methyl esterification of L-isoaspartyl residues in peptides and proteins that result from spontaneous decomposition of normal L-aspartyl and L-asparaginyl residues. It plays a role in the repair and/or degradation of damaged proteins. The sequence is that of Protein-L-isoaspartate O-methyltransferase from Yersinia enterocolitica serotype O:8 / biotype 1B (strain NCTC 13174 / 8081).